The primary structure comprises 215 residues: Probable GTP-binding protein EngB (215 aa).

Positions glutamate 26 to proline 200 constitute an EngB-type G domain. GTP is bound by residues glycine 34–serine 41, glycine 61–leucine 65, aspartate 79–glycine 82, threonine 146–aspartate 149, and phenylalanine 179–serine 181. Mg(2+) is bound by residues serine 41 and threonine 63.

Belongs to the TRAFAC class TrmE-Era-EngA-EngB-Septin-like GTPase superfamily. EngB GTPase family. Mg(2+) is required as a cofactor.

Necessary for normal cell division and for the maintenance of normal septation. This Aliivibrio fischeri (strain MJ11) (Vibrio fischeri) protein is Probable GTP-binding protein EngB.